We begin with the raw amino-acid sequence, 95 residues long: Acylphosphatase 2 (95 aa).

Positions 6–93 constitute an Acylphosphatase-like domain; sequence RVIVTVQGRV…PLPPGFEVRP (88 aa). Active-site residues include arginine 21 and asparagine 39.

This sequence belongs to the acylphosphatase family.

It carries out the reaction an acyl phosphate + H2O = a carboxylate + phosphate + H(+). This is Acylphosphatase 2 (acyP2) from Ralstonia nicotianae (strain ATCC BAA-1114 / GMI1000) (Ralstonia solanacearum).